The primary structure comprises 470 residues: ATP synthase subunit beta (470 aa).

Residue 155 to 162 (GGAGVGKT) coordinates ATP.

Belongs to the ATPase alpha/beta chains family. In terms of assembly, F-type ATPases have 2 components, CF(1) - the catalytic core - and CF(0) - the membrane proton channel. CF(1) has five subunits: alpha(3), beta(3), gamma(1), delta(1), epsilon(1). CF(0) has three main subunits: a(1), b(2) and c(9-12). The alpha and beta chains form an alternating ring which encloses part of the gamma chain. CF(1) is attached to CF(0) by a central stalk formed by the gamma and epsilon chains, while a peripheral stalk is formed by the delta and b chains.

The protein localises to the cell membrane. It carries out the reaction ATP + H2O + 4 H(+)(in) = ADP + phosphate + 5 H(+)(out). In terms of biological role, produces ATP from ADP in the presence of a proton gradient across the membrane. The catalytic sites are hosted primarily by the beta subunits. In Staphylococcus haemolyticus (strain JCSC1435), this protein is ATP synthase subunit beta.